The following is a 475-amino-acid chain: Ribulose bisphosphate carboxylase large chain (475 aa).

The propeptide occupies 1–2; it reads MS. Proline 3 carries the post-translational modification N-acetylproline. Residue lysine 14 is modified to N6,N6,N6-trimethyllysine. Asparagine 123 and threonine 173 together coordinate substrate. Residue lysine 175 is the Proton acceptor of the active site. Position 177 (lysine 177) interacts with substrate. Positions 201, 203, and 204 each coordinate Mg(2+). Lysine 201 carries the post-translational modification N6-carboxylysine. The active-site Proton acceptor is histidine 294. Substrate is bound by residues arginine 295, histidine 327, and serine 379.

This sequence belongs to the RuBisCO large chain family. Type I subfamily. In terms of assembly, heterohexadecamer of 8 large chains and 8 small chains; disulfide-linked. The disulfide link is formed within the large subunit homodimers. Mg(2+) is required as a cofactor. The disulfide bond which can form in the large chain dimeric partners within the hexadecamer appears to be associated with oxidative stress and protein turnover.

The protein localises to the plastid. The protein resides in the chloroplast. The catalysed reaction is 2 (2R)-3-phosphoglycerate + 2 H(+) = D-ribulose 1,5-bisphosphate + CO2 + H2O. It catalyses the reaction D-ribulose 1,5-bisphosphate + O2 = 2-phosphoglycolate + (2R)-3-phosphoglycerate + 2 H(+). RuBisCO catalyzes two reactions: the carboxylation of D-ribulose 1,5-bisphosphate, the primary event in carbon dioxide fixation, as well as the oxidative fragmentation of the pentose substrate in the photorespiration process. Both reactions occur simultaneously and in competition at the same active site. The protein is Ribulose bisphosphate carboxylase large chain of Quercus rubra (Northern red oak).